A 344-amino-acid polypeptide reads, in one-letter code: Lysophosphatidic acid receptor 6 (344 aa).

The Extracellular segment spans residues 1 to 19; the sequence is MVSVNSSHCFYNDSFKYTL. N-linked (GlcNAc...) asparagine glycosylation is present at asparagine 5. Residues 20–46 traverse the membrane as a helical segment; sequence YGCMFSMVFVLGLISNCVAIYIFICVL. The Cytoplasmic portion of the chain corresponds to 47 to 55; it reads KVRNETTTY. A helical membrane pass occupies residues 56-79; that stretch reads MINLAMSDLLFVFTLPFRIFYFTT. The Extracellular portion of the chain corresponds to 80 to 92; that stretch reads RNWPFGDLLCKIS. A disulfide bond links cysteine 89 and cysteine 168. A helical membrane pass occupies residues 93 to 112; it reads VMLFYTNMYGSILFLTCISV. Over 113–133 the chain is Cytoplasmic; sequence DRFLAIVYPFKSKTLRTKRNA. The helical transmembrane segment at 134-154 threads the bilayer; the sequence is KIVCTGVWLTVIGGSAPAVFV. Topologically, residues 155-181 are extracellular; it reads QSTHSQGNNASEACFENFPEATWKTYL. The chain crosses the membrane as a helical span at residues 182–209; sequence SRIVIFIEIVGFFIPLILNVTCSSMVLK. Topologically, residues 210-227 are cytoplasmic; the sequence is TLTKPVTLSRSKINKTKV. The chain crosses the membrane as a helical span at residues 228-253; sequence LKMIFVHLIIFCFCFVPYNINLILYS. Residues 254-272 are Extracellular-facing; the sequence is LVRTQTFVNCSVVAAVRTM. The helical transmembrane segment at 273–292 threads the bilayer; sequence YPITLCIAVSNCCFDPIVYY. Cysteine 284 carries the S-palmitoyl cysteine lipid modification. At 293–344 the chain is on the cytoplasmic side; sequence FTSDTIQNSIKMKNWSVRRSDFRFSEVHGAENFIQHNLQTLKSKIFDNESAA.

The protein belongs to the G-protein coupled receptor 1 family. As to expression, expressed ubiquitously, including in skin and hair follicle cells. Detected in both Henle's and Huxley's layers of the inner root sheath of the hair follicle and in suprabasal layers of the epidermis (at protein level). Expressed at low levels in peripheral blood leukocytes.

It is found in the cell membrane. Its function is as follows. Binds to oleoyl-L-alpha-lysophosphatidic acid (LPA). Intracellular cAMP is involved in the receptor activation. Important for the maintenance of hair growth and texture. The sequence is that of Lysophosphatidic acid receptor 6 (LPAR6) from Homo sapiens (Human).